The primary structure comprises 330 residues: Cyclin-dependent kinase 7 (330 aa).

Positions Tyr5 to Phe289 constitute a Protein kinase domain. ATP is bound by residues Leu11 to Val19 and Lys34. The active-site Proton acceptor is the Asp130. Phosphothreonine is present on Thr163. The interval Lys305–Asp330 is disordered. Basic and acidic residues predominate over residues Arg315 to Asp330.

It belongs to the protein kinase superfamily. CMGC Ser/Thr protein kinase family. CDC2/CDKX subfamily. In terms of assembly, catalytic component which, in association with cyclin H (cyh-1) and mat1, is likely to form the CAK complex.

The catalysed reaction is L-seryl-[protein] + ATP = O-phospho-L-seryl-[protein] + ADP + H(+). It catalyses the reaction L-threonyl-[protein] + ATP = O-phospho-L-threonyl-[protein] + ADP + H(+). The enzyme catalyses [DNA-directed RNA polymerase] + ATP = phospho-[DNA-directed RNA polymerase] + ADP + H(+). Serine/threonine kinase involved in cell cycle control and in RNA polymerase II-mediated RNA transcription. Required for maintaining chromosome ploidy. May phosphorylate the large subunit of RNA polymerase II, ama-1. The polypeptide is Cyclin-dependent kinase 7 (Caenorhabditis elegans).